We begin with the raw amino-acid sequence, 434 residues long: Adenylosuccinate synthetase (434 aa).

Residues 22–28 and 50–52 each bind GTP; these read GDEGKGK and GHT. Asp23 acts as the Proton acceptor in catalysis. Positions 23 and 50 each coordinate Mg(2+). Residues 23 to 26, 48 to 51, Thr139, Arg153, Gln234, Thr249, and Arg313 contribute to the IMP site; these read DEGK and NAGH. His51 serves as the catalytic Proton donor. Substrate is bound at residue 309–315; the sequence is ATTGRKR. GTP-binding positions include Arg315, 341–343, and 423–425; these read KLD and SVG.

Belongs to the adenylosuccinate synthetase family. In terms of assembly, homodimer. Mg(2+) is required as a cofactor.

It is found in the cytoplasm. The catalysed reaction is IMP + L-aspartate + GTP = N(6)-(1,2-dicarboxyethyl)-AMP + GDP + phosphate + 2 H(+). It functions in the pathway purine metabolism; AMP biosynthesis via de novo pathway; AMP from IMP: step 1/2. In terms of biological role, plays an important role in the de novo pathway of purine nucleotide biosynthesis. Catalyzes the first committed step in the biosynthesis of AMP from IMP. This is Adenylosuccinate synthetase from Chlorobium luteolum (strain DSM 273 / BCRC 81028 / 2530) (Pelodictyon luteolum).